The following is a 176-amino-acid chain: Dual-action ribosomal maturation protein DarP (176 aa).

Belongs to the DarP family.

The protein localises to the cytoplasm. Its function is as follows. Member of a network of 50S ribosomal subunit biogenesis factors which assembles along the 30S-50S interface, preventing incorrect 23S rRNA structures from forming. Promotes peptidyl transferase center (PTC) maturation. This is Dual-action ribosomal maturation protein DarP from Actinobacillus pleuropneumoniae serotype 5b (strain L20).